Reading from the N-terminus, the 257-residue chain is Putative B3 domain-containing protein At2g27410 (257 aa).

Residues 5–50 (ARTTKINHFRGTSTTQNPNRGLEPSPSSYVTRRSKEKRPINVEKRS) form a disordered region. Over residues 8 to 35 (TKINHFRGTSTTQNPNRGLEPSPSSYVT) the composition is skewed to polar residues. The TF-B3 DNA-binding region spans 115–209 (TPDFLTEDET…KLCFALTPKN (95 aa)). Residues 212–257 (RGNSLPGGDGASTSGESGQVPLPIPPARYSSNSGQGCSGESSSSSS) are disordered. A compositionally biased stretch (low complexity) spans 241 to 257 (SSNSGQGCSGESSSSSS).

The protein localises to the nucleus. This Arabidopsis thaliana (Mouse-ear cress) protein is Putative B3 domain-containing protein At2g27410.